Consider the following 72-residue polypeptide: MAVEKVNSSSSLAEVIDRILDKGIVIDAWVRVSLVGIELLSIEARVVIASVETYLKYAEAVGLTASAAVPAA.

Belongs to the gas vesicle GvpA family. The gas vesicle shell is 2 nm thick and consists of a single layer of this protein. It forms helical ribs nearly perpendicular to the long axis of the vesicle.

The protein resides in the gas vesicle shell. In terms of biological role, gas vesicles are hollow, gas filled proteinaceous nanostructures found in some microorganisms. During planktonic growth they allow positioning of the organism at a favorable depth for light or nutrient acquisition. GvpA forms the protein shell. The sequence is that of Gas vesicle protein A from Pseudanabaena galeata (strain PCC 6901).